The primary structure comprises 185 residues: Ribosome-recycling factor (185 aa).

It belongs to the RRF family.

The protein resides in the cytoplasm. Its function is as follows. Responsible for the release of ribosomes from messenger RNA at the termination of protein biosynthesis. May increase the efficiency of translation by recycling ribosomes from one round of translation to another. This is Ribosome-recycling factor from Hamiltonella defensa subsp. Acyrthosiphon pisum (strain 5AT).